The primary structure comprises 362 residues: Phosphoserine aminotransferase (362 aa).

Positions 9 and 42 each coordinate L-glutamate. Residues 76-77 (GR), tryptophan 102, threonine 153, aspartate 174, and glutamine 197 contribute to the pyridoxal 5'-phosphate site. The residue at position 198 (lysine 198) is an N6-(pyridoxal phosphate)lysine. 239–240 (NT) serves as a coordination point for pyridoxal 5'-phosphate.

Belongs to the class-V pyridoxal-phosphate-dependent aminotransferase family. SerC subfamily. In terms of assembly, homodimer. Pyridoxal 5'-phosphate serves as cofactor.

It is found in the cytoplasm. The enzyme catalyses O-phospho-L-serine + 2-oxoglutarate = 3-phosphooxypyruvate + L-glutamate. The catalysed reaction is 4-(phosphooxy)-L-threonine + 2-oxoglutarate = (R)-3-hydroxy-2-oxo-4-phosphooxybutanoate + L-glutamate. The protein operates within amino-acid biosynthesis; L-serine biosynthesis; L-serine from 3-phospho-D-glycerate: step 2/3. Its pathway is cofactor biosynthesis; pyridoxine 5'-phosphate biosynthesis; pyridoxine 5'-phosphate from D-erythrose 4-phosphate: step 3/5. Functionally, catalyzes the reversible conversion of 3-phosphohydroxypyruvate to phosphoserine and of 3-hydroxy-2-oxo-4-phosphonooxybutanoate to phosphohydroxythreonine. In Klebsiella pneumoniae subsp. pneumoniae (strain ATCC 700721 / MGH 78578), this protein is Phosphoserine aminotransferase.